Reading from the N-terminus, the 165-residue chain is Small ribosomal subunit protein uS3m (165 aa).

A mitochondrion-targeting transit peptide spans 1–30 (MNFLKKLLPQVATEVQQLSRSGFHTSSVCC).

The protein belongs to the universal ribosomal protein uS3 family. Component of the mitochondrial ribosome small subunit (28S) which comprises a 12S rRNA and about 30 distinct proteins.

Its subcellular location is the mitochondrion. The protein is Small ribosomal subunit protein uS3m (mRpS24) of Drosophila melanogaster (Fruit fly).